The chain runs to 476 residues: Ribulose bisphosphate carboxylase large chain (476 aa).

The propeptide occupies 1–2 (MS). Proline 3 bears the N-acetylproline mark. Lysine 14 carries the post-translational modification N6,N6,N6-trimethyllysine. Substrate is bound by residues asparagine 123 and threonine 173. Lysine 175 functions as the Proton acceptor in the catalytic mechanism. Lysine 177 contributes to the substrate binding site. Residues lysine 201, aspartate 203, and glutamate 204 each coordinate Mg(2+). Lysine 201 is subject to N6-carboxylysine. The active-site Proton acceptor is histidine 294. Substrate is bound by residues arginine 295, histidine 327, and serine 379.

It belongs to the RuBisCO large chain family. Type I subfamily. As to quaternary structure, heterohexadecamer of 8 large chains and 8 small chains; disulfide-linked. The disulfide link is formed within the large subunit homodimers. The cofactor is Mg(2+). In terms of processing, the disulfide bond which can form in the large chain dimeric partners within the hexadecamer appears to be associated with oxidative stress and protein turnover.

It is found in the plastid. It localises to the chloroplast. The enzyme catalyses 2 (2R)-3-phosphoglycerate + 2 H(+) = D-ribulose 1,5-bisphosphate + CO2 + H2O. It catalyses the reaction D-ribulose 1,5-bisphosphate + O2 = 2-phosphoglycolate + (2R)-3-phosphoglycerate + 2 H(+). RuBisCO catalyzes two reactions: the carboxylation of D-ribulose 1,5-bisphosphate, the primary event in carbon dioxide fixation, as well as the oxidative fragmentation of the pentose substrate in the photorespiration process. Both reactions occur simultaneously and in competition at the same active site. In Liriodendron tulipifera (Tuliptree), this protein is Ribulose bisphosphate carboxylase large chain.